The following is a 459-amino-acid chain: Zinc finger and BTB domain-containing protein 9 (459 aa).

In terms of domain architecture, BTB spans cysteine 48–leucine 112. Residues valine 178 to leucine 189 are compositionally biased toward polar residues. Disordered stretches follow at residues valine 178 to glutamate 200 and glutamate 212 to isoleucine 274. Glycyl lysine isopeptide (Lys-Gly) (interchain with G-Cter in SUMO2) cross-links involve residues lysine 285, lysine 293, and lysine 368. Positions lysine 293–proline 356 are disordered. The segment at phenylalanine 397–histidine 419 adopts a C2H2-type 1 zinc-finger fold. The C2H2-type 2; atypical zinc-finger motif lies at histidine 424–cysteine 446.

It localises to the nucleus. May be involved in transcriptional regulation. In Mus musculus (Mouse), this protein is Zinc finger and BTB domain-containing protein 9 (Zbtb9).